The sequence spans 296 residues: Sulfotransferase 1E1 (296 aa).

Position 49–54 (49–54 (KSGTTW)) interacts with 3'-phosphoadenylyl sulfate. 107-109 (KTH) provides a ligand contact to substrate. His109 serves as the catalytic Proton acceptor. Residues Arg131, Ser139, Tyr194, 228-233 (TSFQEM), and 258-260 (RKG) contribute to the 3'-phosphoadenylyl sulfate site.

This sequence belongs to the sulfotransferase 1 family. Homodimer. The N-terminus is blocked. As to expression, adrenal gland and much less in liver. Detectable only during pregnancy in uterine.

The protein resides in the cytoplasm. The protein localises to the cytosol. It catalyses the reaction estrone + 3'-phosphoadenylyl sulfate = estrone 3-sulfate + adenosine 3',5'-bisphosphate + H(+). The enzyme catalyses (24S)-hydroxycholesterol + 3'-phosphoadenylyl sulfate = (24S)-hydroxycholesterol 3-sulfate + adenosine 3',5'-bisphosphate + H(+). It carries out the reaction 17beta-estradiol + 3'-phosphoadenylyl sulfate = 17beta-estradiol 3-sulfate + adenosine 3',5'-bisphosphate + H(+). The catalysed reaction is 3beta-hydroxyandrost-5-en-17-one + 3'-phosphoadenylyl sulfate = dehydroepiandrosterone 3-sulfate + adenosine 3',5'-bisphosphate + H(+). It catalyses the reaction 4-ethylphenol + 3'-phosphoadenylyl sulfate = 4-ethylphenyl sulfate + adenosine 3',5'-bisphosphate + H(+). Inhibited by estradiol. Its function is as follows. Sulfotransferase that utilizes 3'-phospho-5'-adenylyl sulfate (PAPS) as sulfonate donor to catalyze the sulfate conjugation of estradiol and estrone. Is a key enzyme in estrogen homeostasis, the sulfation of estrogens leads to their inactivation. Also sulfates dehydroepiandrosterone (DHEA), pregnenolone, (24S)-hydroxycholesteroland xenobiotic compounds like ethinylestradiol, equalenin, diethyl stilbesterol and 1-naphthol at significantly lower efficiency. Does not sulfonate cortisol, testosterone and dopamine. May play a role in gut microbiota-host metabolic interaction. O-sulfonates 4-ethylphenol (4-EP), a dietary tyrosine-derived metabolite produced by gut bacteria. The product 4-EPS crosses the blood-brain barrier and may negatively regulate oligodendrocyte maturation and myelination, affecting the functional connectivity of different brain regions associated with the limbic system. This chain is Sulfotransferase 1E1 (SULT1E1), found in Cavia porcellus (Guinea pig).